Consider the following 298-residue polypeptide: Iron-regulated virulence regulatory protein IrgB (298 aa).

The region spanning 1–59 (MQDLSAVKAFHALCQHKSLTAAAKALEQPKSTLSRRLAQLEEDLGQSLLMRQGNRLTLT) is the HTH lysR-type domain. The segment at residues 19–38 (LTAAAKALEQPKSTLSRRLA) is a DNA-binding region (H-T-H motif).

The protein belongs to the LysR transcriptional regulatory family.

In terms of biological role, transcription activation of the irgA gene. In the presence of sufficient iron, transcription of both irgA and irgB is negatively regulated by a fur-like protein. In low iron conditions, negative regulation of transcription is removed, and production of irgB leads to positive transcriptional activation of irgA. In Vibrio cholerae serotype O1 (strain ATCC 39315 / El Tor Inaba N16961), this protein is Iron-regulated virulence regulatory protein IrgB (irgB).